An 824-amino-acid chain; its full sequence is Kinesin-like protein KIFC3 (824 aa).

The tract at residues 27-79 (EPKPGMARPAPASPAARPFPHTGQGRLRTGRGKDILPSGEEDSTSRTAARPSL) is disordered. Residues 33–46 (ARPAPASPAARPFP) are compositionally biased toward low complexity. Coiled coils occupy residues 100–360 (LTVQ…ENLA) and 393–430 (LLQEALRSVKAEIGQAIEEVNSNNQELLRKYRRELQLR). Residues 443 to 766 (NIRVIARVRP…LRFAERVRSV (324 aa)) form the Kinesin motor domain. 526-533 (GQTGAGKT) is an ATP binding site. The interval 771 to 824 (GSRRTELGSWSSQEHLEWEPACQTPQPTARAHSAPGSGTSSRPGSIRRKLQPSA) is disordered. Phosphoserine is present on residues Ser811 and Ser815. The segment covering 815-824 (SIRRKLQPSA) has biased composition (basic residues).

The protein belongs to the TRAFAC class myosin-kinesin ATPase superfamily. Kinesin family. Interacts with annexin XIIIB. In terms of tissue distribution, predominant expression in the kidney, testis and ovary. Also expressed in brain, heart, liver, lung and uterus.

It is found in the cytoplasm. The protein localises to the cytoskeleton. The protein resides in the cytoplasmic vesicle membrane. It localises to the cell junction. Its subcellular location is the adherens junction. It is found in the microtubule organizing center. The protein localises to the centrosome. In terms of biological role, minus-end microtubule-dependent motor protein. Involved in apically targeted transport. Required for zonula adherens maintenance. The polypeptide is Kinesin-like protein KIFC3 (Kifc3) (Mus musculus (Mouse)).